A 231-amino-acid polypeptide reads, in one-letter code: Small ribosomal subunit protein uS2 (231 aa).

Residues methionine 1–glutamate 23 form a disordered region. Over residues serine 7 to glutamate 23 the composition is skewed to basic and acidic residues.

It belongs to the universal ribosomal protein uS2 family.

The chain is Small ribosomal subunit protein uS2 (rps2) from Saccharolobus solfataricus (strain ATCC 35092 / DSM 1617 / JCM 11322 / P2) (Sulfolobus solfataricus).